The sequence spans 320 residues: Adenosine receptor A3 (320 aa).

Over 1–16 the chain is Extracellular; sequence MKANNTTTSALWLQIT. N-linked (GlcNAc...) asparagine glycans are attached at residues N4 and N5. Residues 17–39 form a helical membrane-spanning segment; the sequence is YITMEAAIGLCAVVGNMLVIWVV. The Cytoplasmic portion of the chain corresponds to 40 to 50; that stretch reads KLNRTLRTTTF. A helical transmembrane segment spans residues 51-74; that stretch reads YFIVSLALADIAVGVLVIPLAIAV. Residues 75–86 lie on the Extracellular side of the membrane; the sequence is SLEVQMHFYACL. A disulfide bridge links C85 with C168. A helical transmembrane segment spans residues 87–108; sequence FMSCVLLVFTHASIMSLLAIAV. The Cytoplasmic segment spans residues 109–128; that stretch reads DRYLRVKLTVRYRTVTTQRR. A helical membrane pass occupies residues 129–150; that stretch reads IWLFLGLCWLVSFLVGLTPMFG. Residues 151 to 179 lie on the Extracellular side of the membrane; the sequence is WNRKVTLELSQNSSTLSCHFRSVVGLDYM. The helical transmembrane segment at 180 to 200 threads the bilayer; it reads VFFSFITWILIPLVVMCIIYL. The Cytoplasmic segment spans residues 201–233; that stretch reads DIFYIIRNKLSQNLTGFRETRAFYGREFKTAKS. The chain crosses the membrane as a helical span at residues 234–257; sequence LFLVLFLFALCWLPLSIINFVSYF. At 258-263 the chain is on the extracellular side; that stretch reads NVKIPE. A helical transmembrane segment spans residues 264–286; it reads IAMCLGILLSHANSMMNPIVYAC. Over 287-320 the chain is Cytoplasmic; sequence KIKKFKETYFVILRACRLCQTSDSLDSNLEQTTE. Residue C305 is the site of S-palmitoyl cysteine attachment. Residues T307, T318, and T319 each carry the phosphothreonine modification.

The protein belongs to the G-protein coupled receptor 1 family. In terms of processing, phosphorylation on Thr-318 and Thr-319 may be crucial for rapid desensitization. Phosphorylation on Thr-318 may be necessary for phosphorylation on Thr-319 to occur. Testis, particularly in spermatocytes and spermatids but not in spermatogonia. Low levels in the brain.

The protein localises to the cell membrane. Its function is as follows. Receptor for adenosine. The activity of this receptor is mediated by G proteins which inhibits adenylyl cyclase. May play a role during reproduction. The sequence is that of Adenosine receptor A3 (Adora3) from Rattus norvegicus (Rat).